The primary structure comprises 168 residues: Alpha-N-acetylgalactosamine-specific lectin (168 aa).

An N-terminal signal peptide occupies residues 1 to 18 (MAFFRALCFVLLVGFAAA). Residues 38-163 (YNGNCYRYFG…CSRAFAYVCK (126 aa)) form the C-type lectin domain. Cystine bridges form between C59/C162 and C136/C154.

As to quaternary structure, monomer, homodimer and homooligomer.

Functionally, alpha-N-acetylgalactosamine-specific lectin. The oligomeric form has Ca(2+)-dependent hemagglutination activity towards sheep erythrocytes. Its hemagglutination activity is inhibited by various monosaccharides, oligosaccharides and glycopeptides, including inhibition by GalNAc, blood group A trisaccharide, Tn antigen, mucin and asialomucin. In Patiria pectinifera (Starfish), this protein is Alpha-N-acetylgalactosamine-specific lectin.